The sequence spans 702 residues: Cadmium, zinc and cobalt-transporting ATPase (702 aa).

Residues 1–86 (MRLVKQEYVL…HIKKSADDGY (86 aa)) are Cytoplasmic-facing. The region spanning 4–72 (VKQEYVLDGL…KVKSIDPHVT (69 aa)) is the HMA domain. Residues cysteine 15 and cysteine 18 each coordinate Cd(2+). The Co(2+) site is built by cysteine 15 and cysteine 18. Residues cysteine 15 and cysteine 18 each coordinate Zn(2+). Residues 87 to 107 (RNRMVNMLIRMAAAVILGAAA) form a helical membrane-spanning segment. At 108 to 116 (YLVQSGTIE) the chain is on the extracellular side. A helical transmembrane segment spans residues 117–136 (FFLFLGAYLIIGGDIIIRAV). The Cytoplasmic portion of the chain corresponds to 137-143 (KNIIRGQ). Residues 144–163 (VFDEHFLMALATIGAFLIQQ) form a helical membrane-spanning segment. At 164–166 (YPE) the chain is on the extracellular side. Residues 167–186 (GVAVMLFYQIGELFQGAAVS) traverse the membrane as a helical segment. At 187–320 (RSRKSISALM…ITKFAKYYTP (134 aa)) the chain is on the cytoplasmic side. Residues 321–339 (AVVIIAVLLAFVPPLVLSG) form a helical membrane-spanning segment. At 340–345 (AALSDW) the chain is on the extracellular side. A helical transmembrane segment spans residues 346–363 (VYRALIFLVISCPCALVV). Topologically, residues 364–648 (SIPLGFFGGI…AIRIAKRTRR (285 aa)) are cytoplasmic. Aspartate 401 serves as the catalytic 4-aspartylphosphate intermediate. Residues aspartate 595 and aspartate 599 each coordinate Mg(2+). The helical transmembrane segment at 649-670 (IVWQNIGFALGVKAIFLILGAF) threads the bilayer. Topologically, residues 671–678 (GIATMWEA) are extracellular. Residues 679–694 (VFSDVGVTLLAVANAM) traverse the membrane as a helical segment. Residues 695-702 (RVMRLKNK) lie on the Cytoplasmic side of the membrane.

The protein belongs to the cation transport ATPase (P-type) (TC 3.A.3) family. Type IB subfamily.

The protein localises to the cell membrane. It catalyses the reaction Zn(2+)(in) + ATP + H2O = Zn(2+)(out) + ADP + phosphate + H(+). The catalysed reaction is Cd(2+)(in) + ATP + H2O = Cd(2+)(out) + ADP + phosphate + H(+). Couples the hydrolysis of ATP with the transport of cadmium, zinc and cobalt out of the cell. Does not seem to transport copper. This is Cadmium, zinc and cobalt-transporting ATPase (cadA) from Bacillus subtilis (strain 168).